Consider the following 553-residue polypeptide: Putative transport protein YidE (553 aa).

Helical transmembrane passes span 4–24 (IALT…IGNV), 28–48 (GIGL…HFVS), 65–85 (FGLI…FFAS), 95–115 (LFAV…HKLF), and 158–178 (MSYA…MWML). RCK C-terminal domains follow at residues 191–276 (QQHE…VIGQ) and 279–361 (DTSL…VLGN). 6 helical membrane passes run 371 to 391 (MLPV…PVFV), 393 to 413 (GFPA…ALIL), 439 to 459 (IVLF…NTLV), 464 to 484 (LSWI…VGIL), 493 to 513 (YLTM…LAFA), and 533 to 553 (LVMF…WSIG).

The protein belongs to the AAE transporter (TC 2.A.81) family. YidE subfamily.

The protein resides in the cell membrane. The polypeptide is Putative transport protein YidE (Shigella boydii serotype 18 (strain CDC 3083-94 / BS512)).